Reading from the N-terminus, the 212-residue chain is Thymidylate kinase (212 aa).

10–17 serves as a coordination point for ATP; the sequence is GPEGAGKT.

Belongs to the thymidylate kinase family.

It catalyses the reaction dTMP + ATP = dTDP + ADP. Functionally, phosphorylation of dTMP to form dTDP in both de novo and salvage pathways of dTTP synthesis. This is Thymidylate kinase from Bacillus pumilus (strain SAFR-032).